Reading from the N-terminus, the 224-residue chain is Ribonuclease 3 (224 aa).

Residues 4-127 (IEKLEQSLTY…IIGAIHLEAG (124 aa)) form the RNase III domain. A Mg(2+)-binding site is contributed by E40. The active site involves D44. Residues D113 and E116 each coordinate Mg(2+). The active site involves E116. The DRBM domain maps to 154-223 (DYKTKLQEIT…AKIALEKLGA (70 aa)).

This sequence belongs to the ribonuclease III family. In terms of assembly, homodimer. The cofactor is Mg(2+).

It is found in the cytoplasm. The catalysed reaction is Endonucleolytic cleavage to 5'-phosphomonoester.. Functionally, digests double-stranded RNA. Involved in the processing of primary rRNA transcript to yield the immediate precursors to the large and small rRNAs (23S and 16S). Also processes some mRNAs, and tRNAs when they are encoded in the rRNA operon. CRISPR (clustered regularly interspaced short palindromic repeat) is an adaptive immune system that provides protection against mobile genetic elements (viruses, transposable elements and conjugative plasmids). CRISPR clusters contain spacers, sequences complementary to antecedent mobile elements, and target invading nucleic acids. CRISPR clusters are transcribed and processed into CRISPR RNA (crRNA). In this organism endogenous ribonuclease 3 and Cas9 are required for correct coprocessing of pre-crRNA and the trans-encoded small RNA (tracrRNA). Cas9, crRNA and tracrRNA are required for cleavage of invading DNA. Complements pre-crRNA and tracrRNA coprocessing defects in an rnc deletion in S.pyogenes strain 370. This Campylobacter jejuni subsp. jejuni serotype O:2 (strain ATCC 700819 / NCTC 11168) protein is Ribonuclease 3.